Here is a 629-residue protein sequence, read N- to C-terminus: tRNA uridine 5-carboxymethylaminomethyl modification enzyme MnmG (629 aa).

FAD contacts are provided by residues 13–18 (GGGHAG), Val-125, and Ser-180. 273–287 (GPRYCPSIEDKVMRF) serves as a coordination point for NAD(+). Gln-370 contacts FAD.

It belongs to the MnmG family. In terms of assembly, homodimer. Heterotetramer of two MnmE and two MnmG subunits. FAD serves as cofactor.

The protein localises to the cytoplasm. Its function is as follows. NAD-binding protein involved in the addition of a carboxymethylaminomethyl (cmnm) group at the wobble position (U34) of certain tRNAs, forming tRNA-cmnm(5)s(2)U34. In Shigella sonnei (strain Ss046), this protein is tRNA uridine 5-carboxymethylaminomethyl modification enzyme MnmG.